A 590-amino-acid polypeptide reads, in one-letter code: Monoterepene synthase TPS1, chloropastic (590 aa).

Residues 1 to 42 (MALNTFLHFPPCSLSSFSCAVPKLPLAIFHKTMARQIRCPRA) constitute a chloroplast transit peptide. Residues Arg-304, Asp-341, Asp-345, Arg-483, and Asp-486 each coordinate (2E)-geranyl diphosphate. Mg(2+) contacts are provided by Asp-341 and Asp-345. Positions 341-345 (DDMYD) match the DDXXD motif motif. Residues Asp-486, Thr-490, and Glu-494 each coordinate Mg(2+).

The protein belongs to the terpene synthase family. Tpsb subfamily. In terms of assembly, monomer. Requires Mg(2+) as cofactor.

It localises to the plastid. Its subcellular location is the chloroplast. It catalyses the reaction (2E)-geranyl diphosphate = beta-thujene + diphosphate. The enzyme catalyses (2E)-geranyl diphosphate = sabinene + diphosphate. The catalysed reaction is (2E)-geranyl diphosphate = beta-pinene + diphosphate. It carries out the reaction (2E)-geranyl diphosphate = alpha-terpinene + diphosphate. The protein operates within secondary metabolite biosynthesis; terpenoid biosynthesis. Its function is as follows. Monoterpene synthase involved in the biosynthesis of volatile organic compounds. Mediates the conversion of (2E)-geranyl diphosphate (GPP) into beta-thujene, sabinene, beta-pinene and alpha-terpinene. Does not use (2E,6E)-farnesyl diphosphate (FPP) as substrate. This is Monoterepene synthase TPS1, chloropastic from Cananga odorata (Ylang-ylang tree).